The primary structure comprises 171 residues: Protein-export protein SecB (171 aa).

This sequence belongs to the SecB family. As to quaternary structure, homotetramer, a dimer of dimers. One homotetramer interacts with 1 SecA dimer.

The protein resides in the cytoplasm. One of the proteins required for the normal export of preproteins out of the cell cytoplasm. It is a molecular chaperone that binds to a subset of precursor proteins, maintaining them in a translocation-competent state. It also specifically binds to its receptor SecA. The sequence is that of Protein-export protein SecB from Histophilus somni (strain 2336) (Haemophilus somnus).